The primary structure comprises 523 residues: Coatomer subunit delta-2 (523 aa).

Positions 218 to 243 are disordered; it reads DSFASKPKGRPSAAATAPGKGLGMKL. Positions 282 to 523 constitute an MHD domain; that stretch reads SDPVTVTIEE…RLVTANYQVV (242 aa).

This sequence belongs to the adaptor complexes medium subunit family. Delta-COP subfamily. In terms of assembly, oligomeric complex that consists of at least the alpha, beta, beta', gamma, delta, epsilon and zeta subunits.

Its subcellular location is the cytoplasm. The protein resides in the golgi apparatus membrane. The protein localises to the cytoplasmic vesicle. It localises to the COPI-coated vesicle membrane. The coatomer is a cytosolic protein complex that binds to dilysine motifs and reversibly associates with Golgi non-clathrin-coated vesicles, which further mediate biosynthetic protein transport from the ER, via the Golgi up to the trans Golgi network. Coatomer complex is required for budding from Golgi membranes, and is essential for the retrograde Golgi-to-ER transport of dilysine-tagged proteins. This is Coatomer subunit delta-2 from Oryza sativa subsp. japonica (Rice).